The following is a 275-amino-acid chain: Phosphate import ATP-binding protein PstB (275 aa).

In terms of domain architecture, ABC transporter spans 28-270 (MSAKNVSVFY…PREERTKDYI (243 aa)). 60 to 67 (GPSGCGKS) lines the ATP pocket.

Belongs to the ABC transporter superfamily. Phosphate importer (TC 3.A.1.7) family. In terms of assembly, the complex is composed of two ATP-binding proteins (PstB), two transmembrane proteins (PstC and PstA) and a solute-binding protein (PstS).

The protein resides in the cell inner membrane. The enzyme catalyses phosphate(out) + ATP + H2O = ADP + 2 phosphate(in) + H(+). Functionally, part of the ABC transporter complex PstSACB involved in phosphate import. Responsible for energy coupling to the transport system. The chain is Phosphate import ATP-binding protein PstB from Novosphingobium aromaticivorans (strain ATCC 700278 / DSM 12444 / CCUG 56034 / CIP 105152 / NBRC 16084 / F199).